The primary structure comprises 267 residues: 2-keto-3-deoxy-L-rhamnonate aldolase (267 aa).

His-49 functions as the Proton acceptor in the catalytic mechanism. A substrate-binding site is contributed by Gln-151. Glu-153 contributes to the Mg(2+) binding site. Substrate is bound by residues Ala-178 and Asp-179. Asp-179 provides a ligand contact to Mg(2+).

It belongs to the HpcH/HpaI aldolase family. KDR aldolase subfamily. As to quaternary structure, homohexamer. Mg(2+) is required as a cofactor.

It carries out the reaction 2-dehydro-3-deoxy-L-rhamnonate = (S)-lactaldehyde + pyruvate. Functionally, catalyzes the reversible retro-aldol cleavage of 2-keto-3-deoxy-L-rhamnonate (KDR) to pyruvate and lactaldehyde. This Escherichia coli O17:K52:H18 (strain UMN026 / ExPEC) protein is 2-keto-3-deoxy-L-rhamnonate aldolase.